The chain runs to 138 residues: Large ribosomal subunit protein uL14m (138 aa).

Belongs to the universal ribosomal protein uL14 family. As to quaternary structure, component of the mitochondrial large ribosomal subunit (mt-LSU). Mature yeast 74S mitochondrial ribosomes consist of a small (37S) and a large (54S) subunit. The 37S small subunit contains a 15S ribosomal RNA (15S mt-rRNA) and 34 different proteins. The 54S large subunit contains a 21S rRNA (21S mt-rRNA) and 46 different proteins.

It is found in the mitochondrion. Its function is as follows. Component of the mitochondrial ribosome (mitoribosome), a dedicated translation machinery responsible for the synthesis of mitochondrial genome-encoded proteins, including at least some of the essential transmembrane subunits of the mitochondrial respiratory chain. The mitoribosomes are attached to the mitochondrial inner membrane and translation products are cotranslationally integrated into the membrane. The protein is Large ribosomal subunit protein uL14m (MRPL38) of Saccharomyces cerevisiae (strain ATCC 204508 / S288c) (Baker's yeast).